Consider the following 95-residue polypeptide: Co-chaperonin GroES (95 aa).

This sequence belongs to the GroES chaperonin family. Heptamer of 7 subunits arranged in a ring. Interacts with the chaperonin GroEL.

Its subcellular location is the cytoplasm. Together with the chaperonin GroEL, plays an essential role in assisting protein folding. The GroEL-GroES system forms a nano-cage that allows encapsulation of the non-native substrate proteins and provides a physical environment optimized to promote and accelerate protein folding. GroES binds to the apical surface of the GroEL ring, thereby capping the opening of the GroEL channel. The chain is Co-chaperonin GroES from Methylocella silvestris (strain DSM 15510 / CIP 108128 / LMG 27833 / NCIMB 13906 / BL2).